The sequence spans 376 residues: uncharacterized protein (376 aa).

The N-terminal stretch at 1–28 is a signal peptide; sequence MCKPRVWRIAHTIVHVGALLLGTSQLTT. C29 carries the N-palmitoyl cysteine lipid modification. C29 carries S-diacylglycerol cysteine lipidation.

The protein belongs to the TP013X lipoprotein family.

It localises to the cell membrane. This is an uncharacterized protein from Treponema pallidum (strain Nichols).